The following is a 613-amino-acid chain: Dihydroxy-acid dehydratase (613 aa).

Mg(2+) is bound at residue Asp81. Cys122 lines the [2Fe-2S] cluster pocket. Residues Asp123 and Lys124 each coordinate Mg(2+). N6-carboxylysine is present on Lys124. A [2Fe-2S] cluster-binding site is contributed by Cys195. Residue Glu491 participates in Mg(2+) binding. Ser517 serves as the catalytic Proton acceptor.

This sequence belongs to the IlvD/Edd family. As to quaternary structure, homodimer. [2Fe-2S] cluster serves as cofactor. It depends on Mg(2+) as a cofactor.

It catalyses the reaction (2R)-2,3-dihydroxy-3-methylbutanoate = 3-methyl-2-oxobutanoate + H2O. The catalysed reaction is (2R,3R)-2,3-dihydroxy-3-methylpentanoate = (S)-3-methyl-2-oxopentanoate + H2O. Its pathway is amino-acid biosynthesis; L-isoleucine biosynthesis; L-isoleucine from 2-oxobutanoate: step 3/4. The protein operates within amino-acid biosynthesis; L-valine biosynthesis; L-valine from pyruvate: step 3/4. Functionally, functions in the biosynthesis of branched-chain amino acids. Catalyzes the dehydration of (2R,3R)-2,3-dihydroxy-3-methylpentanoate (2,3-dihydroxy-3-methylvalerate) into 2-oxo-3-methylpentanoate (2-oxo-3-methylvalerate) and of (2R)-2,3-dihydroxy-3-methylbutanoate (2,3-dihydroxyisovalerate) into 2-oxo-3-methylbutanoate (2-oxoisovalerate), the penultimate precursor to L-isoleucine and L-valine, respectively. The protein is Dihydroxy-acid dehydratase of Vibrio atlanticus (strain LGP32) (Vibrio splendidus (strain Mel32)).